A 75-amino-acid chain; its full sequence is Large ribosomal subunit protein bL28 (75 aa).

Belongs to the bacterial ribosomal protein bL28 family.

This Buchnera aphidicola subsp. Acyrthosiphon pisum (strain APS) (Acyrthosiphon pisum symbiotic bacterium) protein is Large ribosomal subunit protein bL28.